Here is a 451-residue protein sequence, read N- to C-terminus: Phosphoglucosamine mutase (451 aa).

Ser-102 serves as the catalytic Phosphoserine intermediate. 4 residues coordinate Mg(2+): Ser-102, Asp-242, Asp-244, and Asp-246. Ser-102 carries the post-translational modification Phosphoserine.

This sequence belongs to the phosphohexose mutase family. It depends on Mg(2+) as a cofactor. Post-translationally, activated by phosphorylation.

The catalysed reaction is alpha-D-glucosamine 1-phosphate = D-glucosamine 6-phosphate. Catalyzes the conversion of glucosamine-6-phosphate to glucosamine-1-phosphate. This is Phosphoglucosamine mutase from Staphylococcus aureus (strain Mu3 / ATCC 700698).